A 484-amino-acid polypeptide reads, in one-letter code: Pheophytinase, chloroplastic (484 aa).

The N-terminal 47 residues, 1–47, are a transit peptide targeting the chloroplast; that stretch reads MEIISLNVVPQCSVVTWSSKLATKRLVPNRSSLLFSGVKKSRLVIRS.

This sequence belongs to the AB hydrolase superfamily. As to quaternary structure, interacts with HCAR, RCCR, PAO and the LHCII complex. Part of a SGR1-CCE-LHCII complex, which acts in chlorophyll breakdown.

It localises to the plastid. The protein localises to the chloroplast thylakoid membrane. It is found in the chloroplast stroma. Functionally, alpha/beta hydrolase dephytylating specifically the Mg-free chlorophyll pigment (pheophytin), yielding pheophorbide. No activity on chlorophyll. Belongs to the chlorophyll catabolic enzymes (CCEs). The polypeptide is Pheophytinase, chloroplastic (PPH) (Arabidopsis thaliana (Mouse-ear cress)).